The primary structure comprises 618 residues: Pyocin-S1 (618 aa).

Belongs to the colicin/pyosin nuclease family. As to quaternary structure, purified pyocin S1 makes up a complex of the two (large and small) proteins. The large protein, but not the pyocin complex, shows in vitro DNase activity.

Causes breakdown of chromosomal DNA as well as complete inhibition of lipid synthesis in sensitive cells. In Pseudomonas aeruginosa, this protein is Pyocin-S1 (pys1).